We begin with the raw amino-acid sequence, 306 residues long: UDP-3-O-acyl-N-acetylglucosamine deacetylase (306 aa).

Zn(2+) is bound by residues His-79, His-238, and Asp-242. His-265 acts as the Proton donor in catalysis.

Belongs to the LpxC family. Zn(2+) serves as cofactor.

It catalyses the reaction a UDP-3-O-[(3R)-3-hydroxyacyl]-N-acetyl-alpha-D-glucosamine + H2O = a UDP-3-O-[(3R)-3-hydroxyacyl]-alpha-D-glucosamine + acetate. The protein operates within glycolipid biosynthesis; lipid IV(A) biosynthesis; lipid IV(A) from (3R)-3-hydroxytetradecanoyl-[acyl-carrier-protein] and UDP-N-acetyl-alpha-D-glucosamine: step 2/6. Its function is as follows. Catalyzes the hydrolysis of UDP-3-O-myristoyl-N-acetylglucosamine to form UDP-3-O-myristoylglucosamine and acetate, the committed step in lipid A biosynthesis. This chain is UDP-3-O-acyl-N-acetylglucosamine deacetylase, found in Shewanella pealeana (strain ATCC 700345 / ANG-SQ1).